We begin with the raw amino-acid sequence, 153 residues long: UPF0756 membrane protein Bcer98_3279 (153 aa).

4 helical membrane passes run 8–28, 54–74, 87–107, and 117–137; these read FLFI…IVAI, LGVT…EIGF, WIAL…LQLL, and LVFG…GPLI.

This sequence belongs to the UPF0756 family.

Its subcellular location is the cell membrane. This chain is UPF0756 membrane protein Bcer98_3279, found in Bacillus cytotoxicus (strain DSM 22905 / CIP 110041 / 391-98 / NVH 391-98).